The primary structure comprises 516 residues: GMP synthase [glutamine-hydrolyzing] (516 aa).

One can recognise a Glutamine amidotransferase type-1 domain in the interval 8–198 (KILILDFGSQ…VVNICGCDTL (191 aa)). Cysteine 84 functions as the Nucleophile in the catalytic mechanism. Catalysis depends on residues histidine 172 and glutamate 174. The 193-residue stretch at 199–391 (WNIENIIEND…LGLPYNMLYR (193 aa)) folds into the GMPS ATP-PPase domain. 226 to 232 (SGGVDSS) is a binding site for ATP.

Homodimer.

The catalysed reaction is XMP + L-glutamine + ATP + H2O = GMP + L-glutamate + AMP + diphosphate + 2 H(+). It functions in the pathway purine metabolism; GMP biosynthesis; GMP from XMP (L-Gln route): step 1/1. Functionally, catalyzes the synthesis of GMP from XMP. The polypeptide is GMP synthase [glutamine-hydrolyzing] (Francisella tularensis subsp. novicida (strain U112)).